The primary structure comprises 226 residues: Thiamine-phosphate synthase (226 aa).

Residues 46–50 (QFRDK) and Asp83 each bind 4-amino-2-methyl-5-(diphosphooxymethyl)pyrimidine. Mg(2+)-binding residues include Asp84 and Asp103. Ser122 lines the 4-amino-2-methyl-5-(diphosphooxymethyl)pyrimidine pocket. Residue 149–151 (TQS) coordinates 2-[(2R,5Z)-2-carboxy-4-methylthiazol-5(2H)-ylidene]ethyl phosphate. Lys152 is a binding site for 4-amino-2-methyl-5-(diphosphooxymethyl)pyrimidine. Residues Gly181 and 201–202 (IT) contribute to the 2-[(2R,5Z)-2-carboxy-4-methylthiazol-5(2H)-ylidene]ethyl phosphate site.

The protein belongs to the thiamine-phosphate synthase family. It depends on Mg(2+) as a cofactor.

It catalyses the reaction 2-[(2R,5Z)-2-carboxy-4-methylthiazol-5(2H)-ylidene]ethyl phosphate + 4-amino-2-methyl-5-(diphosphooxymethyl)pyrimidine + 2 H(+) = thiamine phosphate + CO2 + diphosphate. It carries out the reaction 2-(2-carboxy-4-methylthiazol-5-yl)ethyl phosphate + 4-amino-2-methyl-5-(diphosphooxymethyl)pyrimidine + 2 H(+) = thiamine phosphate + CO2 + diphosphate. The enzyme catalyses 4-methyl-5-(2-phosphooxyethyl)-thiazole + 4-amino-2-methyl-5-(diphosphooxymethyl)pyrimidine + H(+) = thiamine phosphate + diphosphate. The protein operates within cofactor biosynthesis; thiamine diphosphate biosynthesis; thiamine phosphate from 4-amino-2-methyl-5-diphosphomethylpyrimidine and 4-methyl-5-(2-phosphoethyl)-thiazole: step 1/1. Functionally, condenses 4-methyl-5-(beta-hydroxyethyl)thiazole monophosphate (THZ-P) and 2-methyl-4-amino-5-hydroxymethyl pyrimidine pyrophosphate (HMP-PP) to form thiamine monophosphate (TMP). This chain is Thiamine-phosphate synthase, found in Haemophilus influenzae (strain PittGG).